Here is a 482-residue protein sequence, read N- to C-terminus: Glutamate--tRNA ligase (482 aa).

Residues 9-19 (PSPTGPIHVGN) carry the 'HIGH' region motif. Zn(2+)-binding residues include Cys106, Cys108, Cys133, and Asp135. Residues 250-254 (KLSKR) carry the 'KMSKS' region motif. Lys253 contributes to the ATP binding site.

It belongs to the class-I aminoacyl-tRNA synthetase family. Glutamate--tRNA ligase type 1 subfamily. In terms of assembly, monomer. Zn(2+) serves as cofactor.

The protein resides in the cytoplasm. The catalysed reaction is tRNA(Glu) + L-glutamate + ATP = L-glutamyl-tRNA(Glu) + AMP + diphosphate. In terms of biological role, catalyzes the attachment of glutamate to tRNA(Glu) in a two-step reaction: glutamate is first activated by ATP to form Glu-AMP and then transferred to the acceptor end of tRNA(Glu). The polypeptide is Glutamate--tRNA ligase (Symbiobacterium thermophilum (strain DSM 24528 / JCM 14929 / IAM 14863 / T)).